A 150-amino-acid polypeptide reads, in one-letter code: Lipoprotein signal peptidase (150 aa).

3 helical membrane passes run 5–25 (LSLV…NWIV), 59–79 (QQWF…WFLW), and 83–103 (AQNW…GNFI). Residues Asp113 and Asp129 contribute to the active site. Residues 124-144 (IFNIADILLSVGFVLLFIAIL) form a helical membrane-spanning segment.

The protein belongs to the peptidase A8 family.

It localises to the cell membrane. It catalyses the reaction Release of signal peptides from bacterial membrane prolipoproteins. Hydrolyzes -Xaa-Yaa-Zaa-|-(S,diacylglyceryl)Cys-, in which Xaa is hydrophobic (preferably Leu), and Yaa (Ala or Ser) and Zaa (Gly or Ala) have small, neutral side chains.. Its pathway is protein modification; lipoprotein biosynthesis (signal peptide cleavage). Functionally, this protein specifically catalyzes the removal of signal peptides from prolipoproteins. The sequence is that of Lipoprotein signal peptidase from Lactococcus lactis subsp. lactis (strain IL1403) (Streptococcus lactis).